The chain runs to 694 residues: Phosphatase and actin regulator 4 (694 aa).

Disordered regions lie at residues 1–354 (MEDP…SPLV) and 375–405 (QDISQQEDQKTEVPKKIQDQSFGESHIPSRL). Basic residues predominate over residues 45 to 54 (KPWKWRKKKS). Over residues 55–84 (SDKFKETSEVLERKISMRKPREELVKRGVL) the composition is skewed to basic and acidic residues. The stretch at 63 to 88 (EVLERKISMRKPREELVKRGVLLEDP) is one RPEL 1 repeat. A phosphoserine mark is found at serine 116, serine 118, serine 129, and serine 145. Composition is skewed to low complexity over residues 184-209 (AGSTARSVSSTSGSTTVTSAATTAAT) and 231-249 (TLPAAPASANTAATTTAPA). The segment covering 250–259 (KQPPIPPPKP) has biased composition (pro residues). 4 positions are modified to phosphoserine: serine 264, serine 285, serine 335, and serine 337. The span at 329–352 (LIIPPSSPSPPLPTHIPPEPPRSP) shows a compositional bias: pro residues. Residues 381 to 392 (EDQKTEVPKKIQ) are compositionally biased toward basic and acidic residues. Phosphoserine is present on serine 420. Residue threonine 425 is modified to Phosphothreonine. Phosphoserine occurs at positions 436, 446, 457, 503, 505, 549, and 582. The disordered stretch occupies residues 467 to 562 (VPDDEEEEQT…TNLNSWPRKS (96 aa)). The span at 546–559 (SRPSEPETNLNSWP) shows a compositional bias: polar residues. RPEL repeat units follow at residues 575–600 (NTLIRRLSQRPTAEELEQRNILQPKN) and 613–638 (RRLTRKLSQRPTVAELLARKILRFNE). Residues 589 to 608 (ELEQRNILQPKNEADRQAEK) are disordered. Position 620 is a phosphoserine (serine 620).

Belongs to the phosphatase and actin regulator family. As to quaternary structure, binds PPP1CA and actin.

The protein resides in the cytoplasm. Its subcellular location is the cell projection. It localises to the lamellipodium. Functionally, regulator of protein phosphatase 1 (PP1) required for neural tube and optic fissure closure, and enteric neural crest cell (ENCCs) migration during development. Acts as an activator of PP1 by interacting with PPP1CA and preventing phosphorylation of PPP1CA at 'Thr-320'. During neural tube closure, localizes to the ventral neural tube and activates PP1, leading to down-regulate cell proliferation within cranial neural tissue and the neural retina. Also acts as a regulator of migration of enteric neural crest cells (ENCCs) by activating PP1, leading to dephosphorylation and subsequent activation of cofilin (COF1 or COF2) and repression of the integrin signaling through the RHO/ROCK pathway. The chain is Phosphatase and actin regulator 4 (Phactr4) from Mus musculus (Mouse).